The sequence spans 123 residues: Large ribosomal subunit protein uL29 (123 aa).

Belongs to the universal ribosomal protein uL29 family.

This is Large ribosomal subunit protein uL29 (RPL35) from Theileria lestoquardi.